The primary structure comprises 285 residues: Polyamine aminopropyltransferase (285 aa).

A PABS domain is found at 5 to 241 (DNWYIEHFQP…GWWSVTMASK (237 aa)). S-methyl-5'-thioadenosine is bound at residue Gln-35. 2 residues coordinate spermidine: His-66 and Asp-90. S-methyl-5'-thioadenosine is bound by residues Asp-110 and 141–142 (DG). Catalysis depends on Asp-160, which acts as the Proton acceptor. 160–163 (DSTD) contacts spermidine. Pro-167 is an S-methyl-5'-thioadenosine binding site.

Belongs to the spermidine/spermine synthase family. As to quaternary structure, homodimer or homotetramer.

It is found in the cytoplasm. The catalysed reaction is S-adenosyl 3-(methylsulfanyl)propylamine + putrescine = S-methyl-5'-thioadenosine + spermidine + H(+). Its pathway is amine and polyamine biosynthesis; spermidine biosynthesis; spermidine from putrescine: step 1/1. Its function is as follows. Catalyzes the irreversible transfer of a propylamine group from the amino donor S-adenosylmethioninamine (decarboxy-AdoMet) to putrescine (1,4-diaminobutane) to yield spermidine. The polypeptide is Polyamine aminopropyltransferase (Xanthomonas axonopodis pv. citri (strain 306)).